Here is a 145-residue protein sequence, read N- to C-terminus: 3-dehydroquinate dehydratase (145 aa).

Tyr-23 (proton acceptor) is an active-site residue. Substrate-binding residues include Asn-74, His-80, and Asp-87. His-100 (proton donor) is an active-site residue. Residues 101–102 (IS) and Arg-111 each bind substrate.

This sequence belongs to the type-II 3-dehydroquinase family. As to quaternary structure, homododecamer.

The catalysed reaction is 3-dehydroquinate = 3-dehydroshikimate + H2O. It participates in metabolic intermediate biosynthesis; chorismate biosynthesis; chorismate from D-erythrose 4-phosphate and phosphoenolpyruvate: step 3/7. Its function is as follows. Catalyzes a trans-dehydration via an enolate intermediate. This is 3-dehydroquinate dehydratase from Mycobacterium leprae (strain Br4923).